Here is a 376-residue protein sequence, read N- to C-terminus: Glutamate 5-kinase (376 aa).

Lysine 10 serves as a coordination point for ATP. Residues serine 50, aspartate 137, and asparagine 149 each contribute to the substrate site. 169 to 170 (TD) contacts ATP. Residues 275–353 (RGRLVLDAGA…AEIAGVLGFM (79 aa)) form the PUA domain.

It belongs to the glutamate 5-kinase family.

It is found in the cytoplasm. The enzyme catalyses L-glutamate + ATP = L-glutamyl 5-phosphate + ADP. It participates in amino-acid biosynthesis; L-proline biosynthesis; L-glutamate 5-semialdehyde from L-glutamate: step 1/2. Its function is as follows. Catalyzes the transfer of a phosphate group to glutamate to form L-glutamate 5-phosphate. The protein is Glutamate 5-kinase of Alcanivorax borkumensis (strain ATCC 700651 / DSM 11573 / NCIMB 13689 / SK2).